We begin with the raw amino-acid sequence, 716 residues long: Fusoxypene synthase (716 aa).

The segment at 4–328 (LSYQSRLIPP…WLSACSRQNT (325 aa)) is sesterterpenoid synthase. Asp96 lines the Mg(2+) pocket. Residue Asp96 participates in substrate binding. Residues 187 to 190 (RMTN) are substrate. Substrate is bound at residue Asn231. The substrate stretch occupies residues 235-239 (SYERE). The geranylfarnesyl diphosphate synthase stretch occupies residues 329-711 (WKTNCSIDGK…CLATLSMEGC (383 aa)). Isopentenyl diphosphate-binding residues include Lys422, Arg425, and His454. Mg(2+) is bound by residues Asp461 and Asp465. A dimethylallyl diphosphate-binding site is contributed by Arg470. An isopentenyl diphosphate-binding site is contributed by Arg471. 5 residues coordinate dimethylallyl diphosphate: Lys548, Thr549, Gln587, Asn594, and Lys602.

The protein in the N-terminal section; belongs to the terpene synthase family. It in the C-terminal section; belongs to the FPP/GGPP synthase family.

It catalyses the reaction 4 isopentenyl diphosphate + dimethylallyl diphosphate = (2E,6E,10E,14E)-geranylfarnesyl diphosphate + 4 diphosphate. The catalysed reaction is (2E,6E,10E,14E)-geranylfarnesyl diphosphate = fusoxypene A + diphosphate. It carries out the reaction (2E,6E,10E,14E)-geranylfarnesyl diphosphate = fusoxypene B + diphosphate. The enzyme catalyses (2E,6E,10E,14E)-geranylfarnesyl diphosphate = fusoxypene C + diphosphate. It catalyses the reaction (2E,6E,10E,14E)-geranylfarnesyl diphosphate = (-)-astellatene + diphosphate. In terms of biological role, bifunctional sesterterpenoid synthase that performs both prenyl transferase and terpene cyclase activity, converting isopentenyl diphosphate and dimethylallyl diphosphate into geranylfarnesyl diphosphate (GFPP) and then converting GFPP into the enantiomeric sesterterpenes with a 5-6-7-3-5 ring system fusoxypene A, fusoxypene B, fusoxypene C and (-)-astellatene. The sequence is that of Fusoxypene synthase from Fusarium oxysporum (Fusarium vascular wilt).